A 548-amino-acid polypeptide reads, in one-letter code: Probable zinc metalloprotease EGY1, chloroplastic (548 aa).

Residues 1–18 (MGTLTSVAFAAAVNIRFR) constitute a chloroplast transit peptide. Basic and acidic residues predominate over residues 61-76 (NSNRDDSIGENGETHK). Positions 61–116 (NSNRDDSIGENGETHKSSVVKTATFEEEDEETSKSSSTTSSSNEFGSDKTSMPSTI) are disordered. Positions 103 to 116 (NEFGSDKTSMPSTI) are enriched in polar residues. 8 helical membrane-spanning segments follow: residues 242–262 (YVIALILFLLTIGSSVELGIA), 290–310 (LYPFVDAALPLAYGVLGILLF), 326–346 (LSIPYFIPNITLGSFGAITQF), 361–381 (LAGPFAGAALSVSMFAVGLFL), 388–408 (ANDLVQVPSMLFQGSLLLGLI), 416–436 (AALHAATVSIHPLVIAGWCGL), 474–494 (MLGLRVLGGPLALPWGLYVLI), and 516–536 (ALVGIALILVVLTLLPVWDEL).

This sequence belongs to the peptidase M50B family. Expressed in roots, leaves, cotyledons, hypocotyls, stems, flowers and siliques.

The protein localises to the plastid. It is found in the chloroplast membrane. Membrane-associated and ATP-independent metalloprotease required for development of both thylakoid grana and well-organized lamellae in chloroplast. Required for the accumulation of chlorophyll and chlorophyll a/b binding (CAB) proteins (from both PS I and PS II) in chloroplast membranes, and for grana formation and normal chloroplast development. Involved in the regulation of nuclear gene expression in response to ammonium stress and interacts with ABA signaling. Carries out beta-casein degradation in an ATP-independent manner in vitro. This is Probable zinc metalloprotease EGY1, chloroplastic (EGY1) from Arabidopsis thaliana (Mouse-ear cress).